The chain runs to 531 residues: Ceramide kinase (531 aa).

Residues 1–115 (MGAMGAAEPL…SADEQLCHLW (115 aa)) form an essential for enzyme activity region. A required for binding to sulfatide and phosphoinositides region spans residues 1–125 (MGAMGAAEPL…LQTLRGLLES (125 aa)). Residues 128 to 278 (SRPKHLLVFI…IDVSSVHYHN (151 aa)) form the DAGKc domain. ATP is bound by residues 138 to 140 (NPF) and 170 to 174 (TEHAN). 195 to 198 (GGDG) lines the substrate pocket. Residue aspartate 197 is the Proton donor/acceptor of the active site. ATP contacts are provided by residues glutamate 202, 239-241 (GST), arginine 304, and arginine 310. Phosphoserine is present on residues serine 340 and serine 408. 502–504 (DGE) lines the ATP pocket.

It depends on Ca(2+) as a cofactor. Mg(2+) serves as cofactor. In terms of tissue distribution, high level expression in heart, brain, testis and pancreas; low expression in spleen, liver and lung; not detected in skeletal muscle.

It is found in the cytoplasm. Its subcellular location is the cell membrane. It carries out the reaction an N-acylsphing-4-enine + ATP = an N-acylsphing-4-enine 1-phosphate + ADP + H(+). The enzyme catalyses N-(hexanoyl)sphing-4-enine + ATP = N-hexanoylsphing-4-enine 1-phosphate + ADP + H(+). The catalysed reaction is N-(acetyl)-sphing-4-enine + ATP = N-(acetyl)-sphing-4-enine-1-phosphate + ADP + H(+). It catalyses the reaction N-hexadecanoylsphing-4-enine + ATP = N-(hexadecanoyl)-sphing-4-enine-1-phosphate + ADP + H(+). It carries out the reaction N-hexanoyl-(4R)-hydroxysphinganine + ATP = N-hexanoyl-(4R)-hydroxysphinganine-1-phosphate + ADP + H(+). Catalyzes specifically the phosphorylation of ceramide to form ceramide 1-phosphate. Acts efficiently on natural and analog ceramides (C6, C8, C16 ceramides, and C8-dihydroceramide), to a lesser extent on C2-ceramide and C6-dihydroceramide, but not on other lipids, such as various sphingosines. Shows a greater preference for D-erythro isomer of ceramides. Binds phosphoinositides. The protein is Ceramide kinase (Cerk) of Mus musculus (Mouse).